Consider the following 405-residue polypeptide: Acetyl-CoA decarbonylase/synthase complex subunit delta (405 aa).

Belongs to the CdhD family. In terms of assembly, heterodimer of delta and gamma chains. The ACDS complex is made up of alpha, epsilon, beta, gamma and delta chains with a probable stoichiometry of (alpha(2)epsilon(2))(4)-beta(8)-(gamma(1)delta(1))(8).

Functionally, part of a complex that catalyzes the reversible cleavage of acetyl-CoA, allowing autotrophic growth from CO(2). Probably maintains the overall quaternary structure of the ACDS complex. The protein is Acetyl-CoA decarbonylase/synthase complex subunit delta of Methanocaldococcus jannaschii (strain ATCC 43067 / DSM 2661 / JAL-1 / JCM 10045 / NBRC 100440) (Methanococcus jannaschii).